A 272-amino-acid polypeptide reads, in one-letter code: MEFRFNCHPLFRQRIVRINNSLLPTGFVAQHRREALDATAQISEIINFVGQLSAQAQGLSNPVTTSQKLRNSDHHIYLMFESNQKHGLVVGILKVGRKSLYVFDQNGETVNVTAPCVLDFYVHESRQRGGLGRELFDHMLKEENIHPEEMAIDRPSEKLLGFLQKHYGLYKKIPQMNNFVVYEGFFANKHHASDIDGRRMHITASPNTNLFGPTFTTVGEQRRSSSQTRQQVVSPPVVQQPPVGRYAAKRPSCSMAQIIHNSPTTVSTEPNR.

Residues 1 to 186 (MEFRFNCHPL…NNFVVYEGFF (186 aa)) form the N-acetyltransferase domain. Acetyl-CoA contacts are provided by residues 120-133 (FYVH…GLGR) and 156-165 (SEKLLGFLQK). The interval 216–244 (TTVGEQRRSSSQTRQQVVSPPVVQQPPVG) is disordered. Residues 224–244 (SSSQTRQQVVSPPVVQQPPVG) show a composition bias toward low complexity.

It belongs to the acetyltransferase ATAT1 family.

The catalysed reaction is L-lysyl-[alpha-tubulin] + acetyl-CoA = N(6)-acetyl-L-lysyl-[alpha-tubulin] + CoA + H(+). Specifically acetylates 'Lys-40' in alpha-tubulin on the lumenal side of microtubules. Promotes microtubule destabilization and accelerates microtubule dynamics; this activity may be independent of acetylation activity. Acetylates alpha-tubulin with a slow enzymatic rate, due to a catalytic site that is not optimized for acetyl transfer. Enters the microtubule through each end and diffuses quickly throughout the lumen of microtubules. Acetylates only long/old microtubules because of its slow acetylation rate since it does not have time to act on dynamically unstable microtubules before the enzyme is released. The protein is Alpha-tubulin N-acetyltransferase of Aedes aegypti (Yellowfever mosquito).